Reading from the N-terminus, the 345-residue chain is N-acetyl-gamma-glutamyl-phosphate reductase (345 aa).

The active site involves C149.

It belongs to the NAGSA dehydrogenase family. Type 1 subfamily.

The protein resides in the cytoplasm. The enzyme catalyses N-acetyl-L-glutamate 5-semialdehyde + phosphate + NADP(+) = N-acetyl-L-glutamyl 5-phosphate + NADPH + H(+). It functions in the pathway amino-acid biosynthesis; L-arginine biosynthesis; N(2)-acetyl-L-ornithine from L-glutamate: step 3/4. Its function is as follows. Catalyzes the NADPH-dependent reduction of N-acetyl-5-glutamyl phosphate to yield N-acetyl-L-glutamate 5-semialdehyde. This Marinobacter nauticus (strain ATCC 700491 / DSM 11845 / VT8) (Marinobacter aquaeolei) protein is N-acetyl-gamma-glutamyl-phosphate reductase.